A 68-amino-acid chain; its full sequence is Toxin Cg2 (68 aa).

One can recognise an LCN-type CS-alpha/beta domain in the interval 1–66 (KDGYLVNKST…VYPIPGKTCS (66 aa)). Intrachain disulfides connect cysteine 12–cysteine 65, cysteine 16–cysteine 41, cysteine 25–cysteine 46, and cysteine 29–cysteine 48.

Belongs to the long (4 C-C) scorpion toxin superfamily. Sodium channel inhibitor family. In terms of tissue distribution, expressed by the venom gland.

The protein localises to the secreted. Binds to sodium channels (Nav) and inhibits them. This chain is Toxin Cg2, found in Centruroides gracilis (Slenderbrown scorpion).